Here is a 400-residue protein sequence, read N- to C-terminus: MSLDKTQIISQILNHSPSHIIIGYSGGVDSSVLLDITKDLDIPTIAIYINHNIHPDALKWQLHCQTICNNANIDFIAHSLDQAPKGESFEAWASKQRMDFFIEIMSQYSSPILLLGHHLDDQAETFLIQAIRGSGLAGLASMPYYKQLNHGAVLRPLLDYTKKDIQDYASQNKINHIYDDSNENIKYRRNLIRNQIMPILEQINPNISRTLSRSAKICAESSNILQKLLNEKLQKISQNNSLIISELLSLDKDIQKSLIHHWFKETTNQSLKNKQTEEIHKALNNDIHTGWQFDINQQFQISVEYNQLIIKNNNQVDLILDNKDIIEWLKERFNKDFDTRELIVRQRQASDKCRYQGRDKANKLKVLFQELKIPTSERSKAKVILLNDKIIAVYPFFICD.

25-30 contacts ATP; the sequence is SGGVDS.

The protein belongs to the tRNA(Ile)-lysidine synthase family.

The protein resides in the cytoplasm. The enzyme catalyses cytidine(34) in tRNA(Ile2) + L-lysine + ATP = lysidine(34) in tRNA(Ile2) + AMP + diphosphate + H(+). Its function is as follows. Ligates lysine onto the cytidine present at position 34 of the AUA codon-specific tRNA(Ile) that contains the anticodon CAU, in an ATP-dependent manner. Cytidine is converted to lysidine, thus changing the amino acid specificity of the tRNA from methionine to isoleucine. In Francisella philomiragia subsp. philomiragia (strain ATCC 25017 / CCUG 19701 / FSC 153 / O#319-036), this protein is tRNA(Ile)-lysidine synthase.